Reading from the N-terminus, the 304-residue chain is Rhomboid-like protein 19 (304 aa).

A run of 6 helical transmembrane segments spans residues 23–43 (LVVG…LALI), 58–78 (GYFE…LFMG), 93–113 (FIFV…IALY), 120–140 (VYLY…LVGI), 158–175 (WLPS…FFTL), and 179–198 (AYLP…LRYL). Residues 247 to 304 (SEDHDYSTSGAPLPGSDSAEASRRRERGARALEERLGTERLVPARNKDELQSDGLDNV) form a disordered region. Residues 266 to 284 (EASRRRERGARALEERLGT) are compositionally biased toward basic and acidic residues.

It belongs to the peptidase S54 family.

Its subcellular location is the membrane. Functionally, probable rhomboid-type serine protease that catalyzes intramembrane proteolysis. In Arabidopsis thaliana (Mouse-ear cress), this protein is Rhomboid-like protein 19.